Reading from the N-terminus, the 373-residue chain is Cytoplasmic tRNA 2-thiolation protein 1 (373 aa).

Belongs to the TtcA family. CTU1/NCS6/ATPBD3 subfamily.

It localises to the cytoplasm. Its pathway is tRNA modification; 5-methoxycarbonylmethyl-2-thiouridine-tRNA biosynthesis. Functionally, plays a central role in 2-thiolation of mcm(5)S(2)U at tRNA wobble positions of tRNA(Lys), tRNA(Glu) and tRNA(Gln). Directly binds tRNAs and probably acts by catalyzing adenylation of tRNAs, an intermediate required for 2-thiolation. It is unclear whether it acts as a sulfurtransferase that transfers sulfur from thiocarboxylated URM1 onto the uridine of tRNAs at wobble position. Prior mcm(5) tRNA modification by the elongator complex is required for 2-thiolation. May also be involved in protein urmylation. This Malassezia globosa (strain ATCC MYA-4612 / CBS 7966) (Dandruff-associated fungus) protein is Cytoplasmic tRNA 2-thiolation protein 1.